A 200-amino-acid polypeptide reads, in one-letter code: Recombination protein RecR (200 aa).

The C4-type zinc-finger motif lies at 57 to 72 (CERCRNYAQSTLCPVC). Positions 80–175 (SLVCIVATPG…GVSRIAQGVP (96 aa)) constitute a Toprim domain.

The protein belongs to the RecR family.

May play a role in DNA repair. It seems to be involved in an RecBC-independent recombinational process of DNA repair. It may act with RecF and RecO. In Alcanivorax borkumensis (strain ATCC 700651 / DSM 11573 / NCIMB 13689 / SK2), this protein is Recombination protein RecR.